A 262-amino-acid chain; its full sequence is MPKFAANLSMLFTDVPFLDRFKAAADAGFTSVEYLFPYEYPAPLLAEKLRENGLKQVLFNTAPGNIAAGEWGVSALPDRIEDARRDIDNALEYALALNCPSVLVMGGVVPPGEDRDAYQQTFIDNLRYAADKFAPHGINIMIEALSAKVKPNYLFASQYQALELANLIDRPNIYIQVDFFHAQIVDGNLTQIIHDLDGRIGHIQIASVPARHEPDEGEINYPFIFAELDRVNYSGWIGCEYNPRGKTEDGLGWAEPWLEKKH.

E143 acts as the Proton donor/acceptor in catalysis. The Mg(2+) site is built by E143, D178, Q204, and E240. E240 serves as the catalytic Proton donor/acceptor.

The protein belongs to the hyi family. OtnI subfamily.

The enzyme catalyses 2-dehydro-L-erythronate = 3-dehydro-L-erythronate. The catalysed reaction is 2-dehydro-D-erythronate = 3-dehydro-D-erythronate. Functionally, catalyzes the isomerization of 2-oxo-tetronate to 3-oxo-tetronate. This chain is 2-oxo-tetronate isomerase, found in Pectobacterium atrosepticum (strain SCRI 1043 / ATCC BAA-672) (Erwinia carotovora subsp. atroseptica).